A 239-amino-acid chain; its full sequence is uncharacterized protein (239 aa).

The next 4 helical transmembrane spans lie at 9 to 29 (LAIYPIAYVLWGGLMWYSQII), 65 to 85 (IIYLYGFSSMIIGGIAYYLFI), 94 to 114 (IILIDLALGWLFAGLIYTFVV), and 167 to 187 (IYFALAILIPISTLIMGMHWI).

The protein resides in the cell membrane. This is an uncharacterized protein from Methanocaldococcus jannaschii (strain ATCC 43067 / DSM 2661 / JAL-1 / JCM 10045 / NBRC 100440) (Methanococcus jannaschii).